A 326-amino-acid chain; its full sequence is Biotin synthase (326 aa).

The 225-residue stretch at 42–266 folds into the Radical SAM core domain; the sequence is NEIQLAALLN…LMPKSYVRLA (225 aa). [4Fe-4S] cluster-binding residues include cysteine 57, cysteine 61, and cysteine 64. 4 residues coordinate [2Fe-2S] cluster: cysteine 101, cysteine 132, cysteine 192, and arginine 264.

The protein belongs to the radical SAM superfamily. Biotin synthase family. Homodimer. Requires [4Fe-4S] cluster as cofactor. The cofactor is [2Fe-2S] cluster.

It catalyses the reaction (4R,5S)-dethiobiotin + (sulfur carrier)-SH + 2 reduced [2Fe-2S]-[ferredoxin] + 2 S-adenosyl-L-methionine = (sulfur carrier)-H + biotin + 2 5'-deoxyadenosine + 2 L-methionine + 2 oxidized [2Fe-2S]-[ferredoxin]. It participates in cofactor biosynthesis; biotin biosynthesis; biotin from 7,8-diaminononanoate: step 2/2. Its function is as follows. Catalyzes the conversion of dethiobiotin (DTB) to biotin by the insertion of a sulfur atom into dethiobiotin via a radical-based mechanism. The sequence is that of Biotin synthase from Ehrlichia chaffeensis (strain ATCC CRL-10679 / Arkansas).